The sequence spans 510 residues: Aspartate kinase FUB3 (510 aa).

ACT domains follow at residues 372–440 (ILSN…VLPD) and 446–510 (LVGA…KNAM).

It belongs to the aspartokinase family.

The enzyme catalyses L-aspartate + ATP = 4-phospho-L-aspartate + ADP. Its pathway is mycotoxin biosynthesis. In terms of biological role, aspartate kinase; part of the gene cluster that mediates the biosynthesis of fusaric acid, a mycotoxin with low to moderate toxicity to animals and humans, but with high phytotoxic properties. L-aspartate is suggested as fusaric acid amino acid precursor that is activated and further processed to O-acetyl-L-homoserine by cluster enzymes aspartate kinase FUB3 and homoserine O-acetyltransferase FUB5, as well as enzymes of the primary metabolism. The polyketide synthase (PKS) FUB1 generates the triketide trans-2-hexenal which is presumptively released by the hydrolase FUB4 and linked to the NRPS-bound amino acid precursor by NAD(P)-dependent dehydrogenase FUB6. FUB1, FUB4, and the non-canonical NRPS Fub8 may form an enzyme complex. Further processing of the NRPS-bound intermediate might be carried out by FUB6 and the sulfhydrylase FUB7, enabling a spontaneous electrocyclization to close the carbon backbone of fusaric acid. Dihydrofusaric acid is likely to be released via reduction by the thioester reductase (TR) domain of FUB8 whereupon the final oxidation to fusaric acid may (also) be performed by the FMN-dependent dehydrogenase FUB9. This Gibberella moniliformis (strain M3125 / FGSC 7600) (Maize ear and stalk rot fungus) protein is Aspartate kinase FUB3.